Here is a 405-residue protein sequence, read N- to C-terminus: MPEPVAEPALNGLRLNLRIVSIVMFNFASYLTIGLPLAVLPGYVHDAMGFSAFWAGLIISLQYFATLLSRPHAGRYADVLGPKKIVVFGLCGCFLSGLGYLLADIASAWPMINLLLLGLGRVILGIGQSFAGTGSTLWGVGVVGSLHIGRVISWNGIVTYGAMAMGAPLGVLCYAWGGLQGLALTVMGVALLAVLLALPRPSVKANKGKPLPFRAVLGRVWLYGMALALASAGFGVIATFITLFYDAKGWDGAAFALTLFSVAFVGTRLLFPNGINRLGGLNVAMICFGVEIIGLLLVGTAAMPWMAKIGVLLTGMGFSLVFPALGVVAVKAVPPQNQGAALATYTVFMDMSLGVTGPLAGLVMTWAGVPVIYLAAAGLVAMALLLTWRLKKRPPSALPEAASSS.

12 helical membrane-spanning segments follow: residues isoleucine 19–valine 39, methionine 48–leucine 68, isoleucine 85–isoleucine 105, serine 129–glycine 149, glycine 156–tryptophan 176, glycine 178–leucine 198, glycine 224–phenylalanine 244, glycine 252–proline 272, valine 283–methionine 303, isoleucine 309–alanine 329, threonine 344–methionine 364, and tryptophan 366–leucine 386.

Belongs to the major facilitator superfamily. YhhS family.

Its subcellular location is the cell inner membrane. This is an uncharacterized protein from Salmonella typhi.